We begin with the raw amino-acid sequence, 414 residues long: Na(+)-translocating NADH-quinone reductase subunit B (414 aa).

4 consecutive transmembrane segments (helical) span residues 23 to 40 (WFAL…PGLV), 56 to 76 (IMIM…YNAG), 129 to 149 (FLPI…LFCM), and 164 to 184 (ILFA…LGIT). Thr236 carries the FMN phosphoryl threonine modification. A run of 5 helical transmembrane segments spans residues 268 to 288 (IPGS…AMIV), 297 to 317 (IIAG…VIGS), 322 to 342 (MFSM…GMFF), 358 to 378 (WWYG…NPAY), and 381 to 401 (GMML…HLVV).

The protein belongs to the NqrB/RnfD family. As to quaternary structure, composed of six subunits; NqrA, NqrB, NqrC, NqrD, NqrE and NqrF. It depends on FMN as a cofactor.

It localises to the cell inner membrane. The enzyme catalyses a ubiquinone + n Na(+)(in) + NADH + H(+) = a ubiquinol + n Na(+)(out) + NAD(+). In terms of biological role, NQR complex catalyzes the reduction of ubiquinone-1 to ubiquinol by two successive reactions, coupled with the transport of Na(+) ions from the cytoplasm to the periplasm. NqrA to NqrE are probably involved in the second step, the conversion of ubisemiquinone to ubiquinol. The chain is Na(+)-translocating NADH-quinone reductase subunit B from Vibrio vulnificus (strain CMCP6).